Here is a 129-residue protein sequence, read N- to C-terminus: MAKTILAARKHIKKQVVDGIAHIHASFNNTIVTITDRQGNTLGWATAGNSGFRGSRKSTPFAAQVAAERCAEAVKDYGIKNLEVMVKGPGPGRESTVRALNAAGFRITNITDVTPIPHNGCRPPKKRRV.

This sequence belongs to the universal ribosomal protein uS11 family. In terms of assembly, part of the 30S ribosomal subunit. Interacts with proteins S7 and S18. Binds to IF-3.

In terms of biological role, located on the platform of the 30S subunit, it bridges several disparate RNA helices of the 16S rRNA. Forms part of the Shine-Dalgarno cleft in the 70S ribosome. The chain is Small ribosomal subunit protein uS11 from Baumannia cicadellinicola subsp. Homalodisca coagulata.